Reading from the N-terminus, the 59-residue chain is Ferredoxin (59 aa).

2 4Fe-4S ferredoxin-type domains span residues 2-30 (GKITIVNIDDCVACGACSGTCPQSVLEVN) and 31-59 (DHVEIKNPDDCIGCGACVDACPQGVLKVE). Positions 12, 15, 18, 22, 41, 44, 47, and 51 each coordinate [4Fe-4S] cluster.

It depends on [4Fe-4S] cluster as a cofactor.

In terms of biological role, ferredoxins are iron-sulfur proteins that transfer electrons in a wide variety of metabolic reactions. The chain is Ferredoxin from Entamoeba histolytica (strain ATCC 30459 / HM-1:IMSS / ABRM).